The chain runs to 139 residues: Putative pre-16S rRNA nuclease (139 aa).

Belongs to the YqgF nuclease family.

It is found in the cytoplasm. In terms of biological role, could be a nuclease involved in processing of the 5'-end of pre-16S rRNA. The polypeptide is Putative pre-16S rRNA nuclease (Streptococcus thermophilus (strain ATCC BAA-491 / LMD-9)).